We begin with the raw amino-acid sequence, 437 residues long: Protein farnesyltransferase subunit beta (437 aa).

PFTB repeat units lie at residues 123–164 (ATDV…CIIG), 174–215 (REKL…SLTN), 222–263 (FEGT…VILK), 270–312 (LKSL…PLLH), and 332–374 (QQAL…SIAQ). (2E,6E)-farnesyl diphosphate contacts are provided by residues 248–251 (HGGY) and 291–294 (RCNK). Residues Asp297 and Cys299 each contribute to the Zn(2+) site. Residue 300 to 303 (YSFW) coordinates (2E,6E)-farnesyl diphosphate. His362 contributes to the Zn(2+) binding site. Position 432 is a phosphoserine (Ser432). The residue at position 436 (Thr436) is a Phosphothreonine.

The protein belongs to the protein prenyltransferase subunit beta family. Heterodimer of FNTA and FNTB. Requires Zn(2+) as cofactor.

It catalyses the reaction L-cysteinyl-[protein] + (2E,6E)-farnesyl diphosphate = S-(2E,6E)-farnesyl-L-cysteinyl-[protein] + diphosphate. Its function is as follows. Essential subunit of the farnesyltransferase complex. Catalyzes the transfer of a farnesyl moiety from farnesyl diphosphate to a cysteine at the fourth position from the C-terminus of several proteins having the C-terminal sequence Cys-aliphatic-aliphatic-X. This Mus musculus (Mouse) protein is Protein farnesyltransferase subunit beta (Fntb).